We begin with the raw amino-acid sequence, 107 residues long: Holo-[acyl-carrier-protein] synthase (107 aa).

Residues Asp-10 and Glu-54 each contribute to the Mg(2+) site.

Belongs to the P-Pant transferase superfamily. AcpS family. Mg(2+) is required as a cofactor.

The protein localises to the cytoplasm. The catalysed reaction is apo-[ACP] + CoA = holo-[ACP] + adenosine 3',5'-bisphosphate + H(+). Its function is as follows. Transfers the 4'-phosphopantetheine moiety from coenzyme A to a Ser of acyl-carrier-protein. The protein is Holo-[acyl-carrier-protein] synthase of Mycoplasma mobile (strain ATCC 43663 / 163K / NCTC 11711) (Mesomycoplasma mobile).